The following is a 94-amino-acid chain: Small ubiquitin-related modifier 3-like (94 aa).

Residue lysine 11 forms a Glycyl lysine isopeptide (Lys-Gly) (interchain with G-Cter in SUMO) linkage. The region spanning 15 to 92 (DHINLKVAGQ…IDVFQQQTGG (78 aa)) is the Ubiquitin-like domain. Glycine 92 participates in a covalent cross-link: Glycyl lysine isopeptide (Gly-Lys) (interchain with K-? in acceptor proteins). Residues 93-94 (SC) constitute a propeptide that is removed on maturation.

The protein belongs to the ubiquitin family. SUMO subfamily. As to quaternary structure, interacts with sae2 and ube2i. Covalently attached to a number of proteins. In terms of processing, polymeric chains can be formed through Lys-11 cross-linking. Cleavage of precursor form by a sentrin-specific protease is necessary for function.

It localises to the cytoplasm. Its subcellular location is the nucleus. The protein resides in the PML body. Its function is as follows. Ubiquitin-like protein which can be covalently attached to target lysines either as a monomer or as a lysine-linked polymer. Does not seem to be involved in protein degradation and may function as an antagonist of ubiquitin in the degradation process. Plays a role in a number of cellular processes such as nuclear transport, DNA replication and repair, mitosis and signal transduction. Covalent attachment to its substrates requires prior activation by the E1 complex sae1-sae2 and linkage to the E2 enzyme ube2i. The sequence is that of Small ubiquitin-related modifier 3-like (sumo3l) from Danio rerio (Zebrafish).